The following is a 346-amino-acid chain: MSLAQTIMPEGYIFPPKPVPLTQNEQGEYKARIKQLLQEKNAVLVAHYYTDPEIQALAEETGGCVADSLEMARFGTRHDADMIIVAGVRFMGETAKILTPNKTVVMPTLEATCSLDIGCPVDEFSAFCDQHPDRTVVVYANTSTAVKARADWIVTSSCALEIVEHLDELGEKIIWGPDKHLGSYIQKNTGADMIMWNGACIVHDEFKTKALKDMKALHPDAGVLVHPESPEEIVALADAVGSTSQLIKAAQTMSNKKFIVATDRGIFYKMQQLCPDKEFFAAPTAGEGASCKTCAHCPWMAMNGLKAIEEALIDPKGKEVFVDMDLREGALKSLNRMLDFTATMAK.

2 residues coordinate iminosuccinate: histidine 47 and serine 68. Cysteine 113 is a [4Fe-4S] cluster binding site. Residues 139-141 (YAN) and serine 156 contribute to the iminosuccinate site. Residue cysteine 200 participates in [4Fe-4S] cluster binding. Iminosuccinate is bound by residues 226–228 (HPE) and threonine 243. Cysteine 297 contributes to the [4Fe-4S] cluster binding site.

The protein belongs to the quinolinate synthase family. Type 1 subfamily. It depends on [4Fe-4S] cluster as a cofactor.

The protein resides in the cytoplasm. The catalysed reaction is iminosuccinate + dihydroxyacetone phosphate = quinolinate + phosphate + 2 H2O + H(+). It participates in cofactor biosynthesis; NAD(+) biosynthesis; quinolinate from iminoaspartate: step 1/1. Functionally, catalyzes the condensation of iminoaspartate with dihydroxyacetone phosphate to form quinolinate. The sequence is that of Quinolinate synthase from Pseudoalteromonas translucida (strain TAC 125).